The following is a 98-amino-acid chain: Aspartyl/glutamyl-tRNA(Asn/Gln) amidotransferase subunit C (98 aa).

The segment at 75-98 (AQALSGAPAQEQQRFKVPQILGED) is disordered.

It belongs to the GatC family. As to quaternary structure, heterotrimer of A, B and C subunits.

The catalysed reaction is L-glutamyl-tRNA(Gln) + L-glutamine + ATP + H2O = L-glutaminyl-tRNA(Gln) + L-glutamate + ADP + phosphate + H(+). It catalyses the reaction L-aspartyl-tRNA(Asn) + L-glutamine + ATP + H2O = L-asparaginyl-tRNA(Asn) + L-glutamate + ADP + phosphate + 2 H(+). Functionally, allows the formation of correctly charged Asn-tRNA(Asn) or Gln-tRNA(Gln) through the transamidation of misacylated Asp-tRNA(Asn) or Glu-tRNA(Gln) in organisms which lack either or both of asparaginyl-tRNA or glutaminyl-tRNA synthetases. The reaction takes place in the presence of glutamine and ATP through an activated phospho-Asp-tRNA(Asn) or phospho-Glu-tRNA(Gln). The sequence is that of Aspartyl/glutamyl-tRNA(Asn/Gln) amidotransferase subunit C from Streptomyces griseus subsp. griseus (strain JCM 4626 / CBS 651.72 / NBRC 13350 / KCC S-0626 / ISP 5235).